Reading from the N-terminus, the 115-residue chain is Nitrogen regulatory protein P-II 2 (115 aa).

Residue Tyr54 is modified to O-UMP-tyrosine.

The protein belongs to the P(II) protein family.

Functionally, could be involved in the regulation of nitrogen fixation. The polypeptide is Nitrogen regulatory protein P-II 2 (Methanothermobacter thermautotrophicus (strain ATCC 29096 / DSM 1053 / JCM 10044 / NBRC 100330 / Delta H) (Methanobacterium thermoautotrophicum)).